The sequence spans 56 residues: Large ribosomal subunit protein bL32 (56 aa).

The segment at 1–56 (MAVQQNRKTRSKRGMRRSHDALSAPTLSQDKETGTTHRRHHVAPDGFYRGRKVVDV) is disordered. Basic residues predominate over residues 7–16 (RKTRSKRGMR).

This sequence belongs to the bacterial ribosomal protein bL32 family.

This Chromohalobacter salexigens (strain ATCC BAA-138 / DSM 3043 / CIP 106854 / NCIMB 13768 / 1H11) protein is Large ribosomal subunit protein bL32.